A 273-amino-acid chain; its full sequence is Glucosamine-6-phosphate deaminase (273 aa).

Asp72 functions as the Proton acceptor; for enolization step in the catalytic mechanism. Asp141 (for ring-opening step) is an active-site residue. The active-site Proton acceptor; for ring-opening step is the His143. The For ring-opening step role is filled by Glu148.

The protein belongs to the glucosamine/galactosamine-6-phosphate isomerase family. As to quaternary structure, homohexamer.

It is found in the cytoplasm. It carries out the reaction alpha-D-glucosamine 6-phosphate + H2O = beta-D-fructose 6-phosphate + NH4(+). It participates in nucleotide-sugar biosynthesis; UDP-N-acetyl-alpha-D-glucosamine biosynthesis; alpha-D-glucosamine 6-phosphate from D-fructose 6-phosphate: step 1/1. Functionally, catalyzes the reversible conversion of alpha-D-glucosamine 6-phosphate (GlcN-6P) into beta-D-fructose 6-phosphate (Fru-6P) and ammonium ion, a regulatory reaction step in de novo uridine diphosphate-N-acetyl-alpha-D-glucosamine (UDP-GlcNAc) biosynthesis via hexosamine pathway. The polypeptide is Glucosamine-6-phosphate deaminase (Gnpda1) (Anopheles gambiae (African malaria mosquito)).